A 261-amino-acid polypeptide reads, in one-letter code: Indole-3-glycerol phosphate synthase (261 aa).

This sequence belongs to the TrpC family.

It catalyses the reaction 1-(2-carboxyphenylamino)-1-deoxy-D-ribulose 5-phosphate + H(+) = (1S,2R)-1-C-(indol-3-yl)glycerol 3-phosphate + CO2 + H2O. Its pathway is amino-acid biosynthesis; L-tryptophan biosynthesis; L-tryptophan from chorismate: step 4/5. This is Indole-3-glycerol phosphate synthase from Paraburkholderia xenovorans (strain LB400).